A 359-amino-acid chain; its full sequence is Fructose-bisphosphate aldolase (359 aa).

D-glyceraldehyde 3-phosphate is bound at residue serine 62. Catalysis depends on aspartate 110, which acts as the Proton donor. Zn(2+) contacts are provided by histidine 111, aspartate 145, glutamate 175, and histidine 227. Glycine 228 is a binding site for dihydroxyacetone phosphate. Residue histidine 265 participates in Zn(2+) binding. Residues glycine 266 to serine 268 and asparagine 287 to threonine 290 each bind dihydroxyacetone phosphate.

Belongs to the class II fructose-bisphosphate aldolase family. In terms of assembly, homodimer. The cofactor is Zn(2+).

The catalysed reaction is beta-D-fructose 1,6-bisphosphate = D-glyceraldehyde 3-phosphate + dihydroxyacetone phosphate. It participates in carbohydrate degradation; glycolysis; D-glyceraldehyde 3-phosphate and glycerone phosphate from D-glucose: step 4/4. Its function is as follows. Catalyzes the aldol condensation of dihydroxyacetone phosphate (DHAP or glycerone-phosphate) with glyceraldehyde 3-phosphate (G3P) to form fructose 1,6-bisphosphate (FBP) in gluconeogenesis and the reverse reaction in glycolysis. This Haemophilus influenzae (strain ATCC 51907 / DSM 11121 / KW20 / Rd) protein is Fructose-bisphosphate aldolase (fba).